The following is a 501-amino-acid chain: Iroquois-class homeodomain protein IRX-3 (501 aa).

A DNA-binding region (homeobox; TALE-type) is located at residues 125–188 (FGDPSRPKNA…ANARRRLKKE (64 aa)). The interval 190-381 (KMTWAPRSRT…SPPGAAVAPS (192 aa)) is disordered. Composition is skewed to acidic residues over residues 210–220 (REEEDEEEDEE) and 227–258 (ELEE…DLEN). Phosphoserine is present on residues serine 323 and serine 326. A compositionally biased stretch (pro residues) spans 324-339 (LPSPPVSLDPCAPAPA).

This sequence belongs to the TALE/IRO homeobox family.

It is found in the nucleus. Transcription factor involved in SHH-dependent neural patterning. Together with NKX2-2 and NKX6-1 acts to restrict the generation of motor neurons to the appropriate region of the neural tube. Belongs to the class I proteins of neuronal progenitor factors, which are repressed by SHH signals. Involved in the transcriptional repression of MNX1 in non-motor neuron cells. Acts as a regulator of energy metabolism. The protein is Iroquois-class homeodomain protein IRX-3 (IRX3) of Homo sapiens (Human).